The chain runs to 581 residues: Arginine--tRNA ligase (581 aa).

Positions 126–136 (PNLAKEMHVGH) match the 'HIGH' region motif.

It belongs to the class-I aminoacyl-tRNA synthetase family. As to quaternary structure, monomer.

It is found in the cytoplasm. The catalysed reaction is tRNA(Arg) + L-arginine + ATP = L-arginyl-tRNA(Arg) + AMP + diphosphate. The polypeptide is Arginine--tRNA ligase (Shewanella baltica (strain OS223)).